A 155-amino-acid chain; its full sequence is Ribosome maturation factor RimP (155 aa).

The protein belongs to the RimP family.

Its subcellular location is the cytoplasm. Functionally, required for maturation of 30S ribosomal subunits. The polypeptide is Ribosome maturation factor RimP (Listeria monocytogenes serovar 1/2a (strain ATCC BAA-679 / EGD-e)).